The primary structure comprises 354 residues: MSKFWSSLAKQVDPYIPGEQLNDDTIIKLNTNENPYPPSNQVIQAIDEASKNLRLYPSPTVDELRSEIGEMYGLSQDHIFIGNGSDEVLAFSFMSFFEPGNRIKYPEITYSFYPVYAKLFNISTDVIPLNDDYTIPVEHFYNSEGGVIFPNPNAPTGIFLEIDQIKRILENNPNQVVIIDEAYIDFALESAVTLVEAFPNLLVIQTMSKSRSLAGLRIGFAIGNPELIIGLERIKNSFNSYTVDRLAIAGAIEAIRDKDYFLQTTTKIIESRSYLKEQLETRHFDILPSQANFLLVSHKEVNAEVLYQELKKQGILVRYFQKPGLENFLRISIGTPAQIEKLLKKIDHIIKPSP.

Residue Lys209 is modified to N6-(pyridoxal phosphate)lysine.

It belongs to the class-II pyridoxal-phosphate-dependent aminotransferase family. Histidinol-phosphate aminotransferase subfamily. In terms of assembly, homodimer. Requires pyridoxal 5'-phosphate as cofactor.

It carries out the reaction L-histidinol phosphate + 2-oxoglutarate = 3-(imidazol-4-yl)-2-oxopropyl phosphate + L-glutamate. The protein operates within amino-acid biosynthesis; L-histidine biosynthesis; L-histidine from 5-phospho-alpha-D-ribose 1-diphosphate: step 7/9. The chain is Histidinol-phosphate aminotransferase 1 (hisC1) from Oceanobacillus iheyensis (strain DSM 14371 / CIP 107618 / JCM 11309 / KCTC 3954 / HTE831).